Here is a 261-residue protein sequence, read N- to C-terminus: Cytosolic Fe-S cluster assembly factor Nubp2 homolog (261 aa).

14 to 21 (GKGGVGKS) is an ATP binding site. Residues Cys188 and Cys191 each coordinate [4Fe-4S] cluster.

The protein belongs to the Mrp/NBP35 ATP-binding proteins family. NUBP2/CFD1 subfamily. As to quaternary structure, heterotetramer of 2 Nubp1 and 2 Nubp2 chains. [4Fe-4S] cluster serves as cofactor.

It localises to the cytoplasm. In terms of biological role, component of the cytosolic iron-sulfur (Fe/S) protein assembly (CIA) machinery. Required for maturation of extramitochondrial Fe-S proteins. The Nubp1-Nubp2 heterotetramer forms a Fe-S scaffold complex, mediating the de novo assembly of an Fe-S cluster and its transfer to target apoproteins. The protein is Cytosolic Fe-S cluster assembly factor Nubp2 homolog of Drosophila ananassae (Fruit fly).